A 247-amino-acid polypeptide reads, in one-letter code: 23S rRNA (guanosine-2'-O-)-methyltransferase RlmB (247 aa).

3 residues coordinate S-adenosyl-L-methionine: Gly-197, Ile-217, and Leu-226.

Belongs to the class IV-like SAM-binding methyltransferase superfamily. RNA methyltransferase TrmH family. RlmB subfamily.

The protein resides in the cytoplasm. The catalysed reaction is guanosine(2251) in 23S rRNA + S-adenosyl-L-methionine = 2'-O-methylguanosine(2251) in 23S rRNA + S-adenosyl-L-homocysteine + H(+). Functionally, specifically methylates the ribose of guanosine 2251 in 23S rRNA. In Vibrio vulnificus (strain CMCP6), this protein is 23S rRNA (guanosine-2'-O-)-methyltransferase RlmB.